A 167-amino-acid polypeptide reads, in one-letter code: Small ribosomal subunit protein uS9 (167 aa).

The tract at residues 136–167 is disordered; it reads KRAGFLTRDPRATERKKYGLKKARKAPQYSKR. A compositionally biased stretch (basic and acidic residues) spans 143–152; sequence RDPRATERKK. Residues 153 to 167 are compositionally biased toward basic residues; it reads YGLKKARKAPQYSKR.

This sequence belongs to the universal ribosomal protein uS9 family.

The polypeptide is Small ribosomal subunit protein uS9 (Nocardia farcinica (strain IFM 10152)).